The chain runs to 336 residues: Ribosomal RNA large subunit methyltransferase F (336 aa).

It belongs to the methyltransferase superfamily. METTL16/RlmF family.

Its subcellular location is the cytoplasm. The enzyme catalyses adenosine(1618) in 23S rRNA + S-adenosyl-L-methionine = N(6)-methyladenosine(1618) in 23S rRNA + S-adenosyl-L-homocysteine + H(+). Its function is as follows. Specifically methylates the adenine in position 1618 of 23S rRNA. The polypeptide is Ribosomal RNA large subunit methyltransferase F (Yersinia pseudotuberculosis serotype I (strain IP32953)).